Reading from the N-terminus, the 296-residue chain is Elongation factor Ts (296 aa).

The segment at 79-82 is involved in Mg(2+) ion dislocation from EF-Tu; the sequence is TDFV.

This sequence belongs to the EF-Ts family.

The protein localises to the cytoplasm. Associates with the EF-Tu.GDP complex and induces the exchange of GDP to GTP. It remains bound to the aminoacyl-tRNA.EF-Tu.GTP complex up to the GTP hydrolysis stage on the ribosome. This chain is Elongation factor Ts, found in Paracoccus denitrificans (strain Pd 1222).